The following is a 480-amino-acid chain: MNFETVIGLEVHVELNTNSKIFSPTSAHFGNDQNANTNVIDWSFPGVLPVLNKGVVDAGIKAALALNMDIHKKMHFDRKNYFYPDNPKAYQISQFDEPIGYNGWIEVELEDGTTKKIGIERAHLEEDAGKNTHGTDGYSYVDLNRQGVPLIEIVSEADMRSPEEAYAYLTALKEVIQYAGISDVKMEEGSMRVDANISLRPYGQEKFGTKTELKNLNSFSNVRKGLEYEVQRQAEILRSGGQIRQETRRYDEANKATILMRVKEGAADYRYFPEPDXPLFEIXDEWIEEMRTELPEFPKERRARYVSDLGLSDYDASQLTANKVTSDFFEKAVALDGDAKQVSNWLQGEVAQFLNAEGKTLEQIELTPENLVEMIAIIEDGTISSKIAKKVFVHLAKNGGGAREYVEKAGMVQISDPAILIPIIHQVFADNEAAVVDFKSGKRNADKAFTGFLMKATKGQANPQVALKLLAQELAKLKEN.

Belongs to the GatB/GatE family. GatB subfamily. Heterotrimer of A, B and C subunits.

The enzyme catalyses L-glutamyl-tRNA(Gln) + L-glutamine + ATP + H2O = L-glutaminyl-tRNA(Gln) + L-glutamate + ADP + phosphate + H(+). The catalysed reaction is L-aspartyl-tRNA(Asn) + L-glutamine + ATP + H2O = L-asparaginyl-tRNA(Asn) + L-glutamate + ADP + phosphate + 2 H(+). Allows the formation of correctly charged Asn-tRNA(Asn) or Gln-tRNA(Gln) through the transamidation of misacylated Asp-tRNA(Asn) or Glu-tRNA(Gln) in organisms which lack either or both of asparaginyl-tRNA or glutaminyl-tRNA synthetases. The reaction takes place in the presence of glutamine and ATP through an activated phospho-Asp-tRNA(Asn) or phospho-Glu-tRNA(Gln). The polypeptide is Aspartyl/glutamyl-tRNA(Asn/Gln) amidotransferase subunit B (Streptococcus pneumoniae serotype 19F (strain G54)).